A 98-amino-acid polypeptide reads, in one-letter code: Cystatin-B (98 aa).

Position 1 is an N-acetylmethionine (methionine 1). Positions 46 to 50 (QVVAG) match the Secondary area of contact motif.

This sequence belongs to the cystatin family. In terms of assembly, able to form dimers stabilized by noncovalent forces.

Its subcellular location is the cytoplasm. It localises to the nucleus. Functionally, this is an intracellular thiol proteinase inhibitor. Tightly binding reversible inhibitor of cathepsins L, H and B. This is Cystatin-B (CSTB) from Pongo pygmaeus (Bornean orangutan).